We begin with the raw amino-acid sequence, 382 residues long: Na(+)/H(+) antiporter NhaA 2 (382 aa).

11 helical membrane-spanning segments follow: residues 7–27 (MALS…LALL), 58–78 (LDLW…GLEL), 94–114 (SLPI…FAAI), 124–144 (GWAI…MLLG), 153–173 (LFLL…IALF), 178–198 (LSAL…LLNY), 199–219 (YHIT…IAML), 255–275 (NPWV…GIDI), 291–311 (IILG…FIAI), 327–347 (FYGI…IDGL), and 361–381 (LAIL…LKIV).

The protein belongs to the NhaA Na(+)/H(+) (TC 2.A.33) antiporter family.

The protein localises to the cell inner membrane. The catalysed reaction is Na(+)(in) + 2 H(+)(out) = Na(+)(out) + 2 H(+)(in). Its function is as follows. Na(+)/H(+) antiporter that extrudes sodium in exchange for external protons. This chain is Na(+)/H(+) antiporter NhaA 2, found in Campylobacter jejuni subsp. doylei (strain ATCC BAA-1458 / RM4099 / 269.97).